The primary structure comprises 430 residues: FAD-dependent monooxygenase asL4 (430 aa).

Residues 11-14, 33-34, Arg108, and Tyr278 each bind FAD; these read GGIA and ER.

Belongs to the aromatic-ring hydroxylase family. FAD serves as cofactor.

The protein operates within secondary metabolite biosynthesis; terpenoid biosynthesis. Functionally, flavin-dependent monooxygenase; part of the gene cluster that mediates the biosynthesis of xenovulene A, an unusual meroterpenoid that has potent inhibitory effects on the human gamma-aminobutyrate A (GABAA) benzodiazepine receptor. The first step of xenovulene A biosynthesis is the biosynthesis of 3-methylorcinaldehyde performed by the non-reducing polyketide synthase aspks1. The salicylate hydroxylase asL1 then catalyzes the oxidative dearomatization of 3-methylorcinaldehyde to yield a dearomatized hydroxycyclohexadione. The 2-oxoglutarate-dependent dioxygenase asL3 further catalyzes the oxidative ring expansion to provide the first tropolone metabolite. The cytochrome P450 monooxygenase asR2 allows the synthesis of tropolone hemiacetal. In parallel, a previously unrecognised class of terpene cyclase, asR6, produces alpha-humulene from farnesylpyrophosphate (FPP). The putative Diels-Alderase asR5 probably catalyzes the formation of the tropolone-humulene skeleton by linking humulene and the polyketide moiety. Oxidative-ring contractions catalyzed by asL4 and asL6 then processively remove carbon atoms from the polyketide to yield xenovulene A. The chain is FAD-dependent monooxygenase asL4 from Sarocladium schorii (Acremonium strictum (strain IMI 501407)).